We begin with the raw amino-acid sequence, 418 residues long: tRNA-2-methylthio-N(6)-dimethylallyladenosine synthase (418 aa).

Residues 2–118 form the MTTase N-terminal domain; sequence PGYYLWTIGC…WREIPEGFIL (117 aa). [4Fe-4S] cluster-binding residues include C11, C47, C81, C134, C138, and C141. The Radical SAM core domain maps to 120–351; it reads LRPPVSANVT…EDLQKETVGK (232 aa). The TRAM domain maps to 346–414; the sequence is KETVGKANAA…PWSLQAKLVN (69 aa).

The protein belongs to the methylthiotransferase family. MiaB subfamily. As to quaternary structure, monomer. [4Fe-4S] cluster is required as a cofactor.

It is found in the cytoplasm. It carries out the reaction N(6)-dimethylallyladenosine(37) in tRNA + (sulfur carrier)-SH + AH2 + 2 S-adenosyl-L-methionine = 2-methylsulfanyl-N(6)-dimethylallyladenosine(37) in tRNA + (sulfur carrier)-H + 5'-deoxyadenosine + L-methionine + A + S-adenosyl-L-homocysteine + 2 H(+). Catalyzes the methylthiolation of N6-(dimethylallyl)adenosine (i(6)A), leading to the formation of 2-methylthio-N6-(dimethylallyl)adenosine (ms(2)i(6)A) at position 37 in tRNAs that read codons beginning with uridine. The sequence is that of tRNA-2-methylthio-N(6)-dimethylallyladenosine synthase from Dehalococcoides mccartyi (strain CBDB1).